A 323-amino-acid polypeptide reads, in one-letter code: tRNA U34 carboxymethyltransferase (323 aa).

Carboxy-S-adenosyl-L-methionine contacts are provided by residues Lys-91, Trp-105, Lys-110, Gly-130, 152 to 154 (DPT), 181 to 182 (IE), Met-196, Tyr-200, and Arg-315.

This sequence belongs to the class I-like SAM-binding methyltransferase superfamily. CmoB family. As to quaternary structure, homotetramer.

It catalyses the reaction carboxy-S-adenosyl-L-methionine + 5-hydroxyuridine(34) in tRNA = 5-carboxymethoxyuridine(34) in tRNA + S-adenosyl-L-homocysteine + H(+). Functionally, catalyzes carboxymethyl transfer from carboxy-S-adenosyl-L-methionine (Cx-SAM) to 5-hydroxyuridine (ho5U) to form 5-carboxymethoxyuridine (cmo5U) at position 34 in tRNAs. This Escherichia coli (strain SE11) protein is tRNA U34 carboxymethyltransferase.